A 93-amino-acid chain; its full sequence is Small ribosomal subunit protein uS19 (93 aa).

This sequence belongs to the universal ribosomal protein uS19 family.

In terms of biological role, protein S19 forms a complex with S13 that binds strongly to the 16S ribosomal RNA. The chain is Small ribosomal subunit protein uS19 from Frankia alni (strain DSM 45986 / CECT 9034 / ACN14a).